Reading from the N-terminus, the 65-residue chain is uncharacterized protein (65 aa).

This is an uncharacterized protein from Dictyostelium discoideum (Social amoeba).